The chain runs to 421 residues: Glutamate-1-semialdehyde 2,1-aminomutase 1 (421 aa).

Lys258 is modified (N6-(pyridoxal phosphate)lysine).

The protein belongs to the class-III pyridoxal-phosphate-dependent aminotransferase family. HemL subfamily. Pyridoxal 5'-phosphate serves as cofactor.

Its subcellular location is the cytoplasm. The catalysed reaction is (S)-4-amino-5-oxopentanoate = 5-aminolevulinate. The protein operates within porphyrin-containing compound metabolism; protoporphyrin-IX biosynthesis; 5-aminolevulinate from L-glutamyl-tRNA(Glu): step 2/2. This chain is Glutamate-1-semialdehyde 2,1-aminomutase 1, found in Cenarchaeum symbiosum (strain A).